The primary structure comprises 862 residues: Protein JOKA2 (862 aa).

In terms of domain architecture, PB1 spans 6–90; sequence SIVIKVKYEE…NPLRISARLN (85 aa). The segment covering 92–106 has biased composition (low complexity); the sequence is GERSGRASARSSGNS. Disordered stretches follow at residues 92–117, 194–234, and 295–345; these read GERS…VQPP, KGNT…ASNE, and VRNS…DSSG. Polar residues predominate over residues 325 to 345; that stretch reads SASSSKVKQCNWDSPNADSSG. The ZZ-type; degenerate zinc finger occupies 442–492; sequence HKGVRCDGCGVHPITGPRFISKVKENYDLCSICFAEMGNDADYIRMDRPLT. Residues cysteine 447, cysteine 450, cysteine 471, and cysteine 474 each contribute to the Zn(2+) site. One can recognise a UBA domain in the interval 811 to 860; sequence SVDDLCGVAEWDPILEELKEMGFCDKEMNKKLLKKNNGSIKRVVMDLIAG. The short motif at 817 to 824 is the ATG8 interacting motif (AIM) element; the sequence is GVAEWDPI.

As to quaternary structure, interacts (via C-terminal AIM motif) with ATG8CL.

It localises to the vacuole. The protein resides in the cytoplasmic vesicle. The protein localises to the autophagosome. Its function is as follows. Autophagic substrate that functions as a host autophagy cargo receptor. Requires ATG8 protein expression to be recognized as an autophagic substrate. Activates ATG8CL-mediated selective autophagy, and contributes to defense against the fungal pathogen Phytophtora infestans. The chain is Protein JOKA2 from Solanum tuberosum (Potato).